The following is a 138-amino-acid chain: Small ribosomal subunit protein uS12 (138 aa).

Positions 33–55 (KEHTNVSSPQKRGVCTRVGTMTP) are disordered. A 3-methylthioaspartic acid modification is found at Asp102.

It belongs to the universal ribosomal protein uS12 family. In terms of assembly, part of the 30S ribosomal subunit. Contacts proteins S8 and S17. May interact with IF1 in the 30S initiation complex.

In terms of biological role, with S4 and S5 plays an important role in translational accuracy. Functionally, interacts with and stabilizes bases of the 16S rRNA that are involved in tRNA selection in the A site and with the mRNA backbone. Located at the interface of the 30S and 50S subunits, it traverses the body of the 30S subunit contacting proteins on the other side and probably holding the rRNA structure together. The combined cluster of proteins S8, S12 and S17 appears to hold together the shoulder and platform of the 30S subunit. In Bacillus licheniformis (strain ATCC 14580 / DSM 13 / JCM 2505 / CCUG 7422 / NBRC 12200 / NCIMB 9375 / NCTC 10341 / NRRL NRS-1264 / Gibson 46), this protein is Small ribosomal subunit protein uS12.